The primary structure comprises 899 residues: DNA mismatch repair protein MutS (899 aa).

Residues 1–20 (MGLQKKTDPEQAQADSAASR) are disordered. 631–638 (GPNMGGKS) serves as a coordination point for ATP. Residues 832-852 (PPTPDDDEDDFGAAPSAVPAP) form a disordered region. Low complexity predominate over residues 843–852 (GAAPSAVPAP).

It belongs to the DNA mismatch repair MutS family.

In terms of biological role, this protein is involved in the repair of mismatches in DNA. It is possible that it carries out the mismatch recognition step. This protein has a weak ATPase activity. The polypeptide is DNA mismatch repair protein MutS (Cupriavidus necator (strain ATCC 17699 / DSM 428 / KCTC 22496 / NCIMB 10442 / H16 / Stanier 337) (Ralstonia eutropha)).